Reading from the N-terminus, the 117-residue chain is Pterin-4-alpha-carbinolamine dehydratase 2 (117 aa).

N6-acetyllysine; alternate occurs at positions 101, 105, and 112. Residues K101, K105, and K112 each carry the N6-succinyllysine; alternate modification.

Belongs to the pterin-4-alpha-carbinolamine dehydratase family. In terms of assembly, homotetramer. Interacts with DYRK1B.

The catalysed reaction is (4aS,6R)-4a-hydroxy-L-erythro-5,6,7,8-tetrahydrobiopterin = (6R)-L-erythro-6,7-dihydrobiopterin + H2O. Its function is as follows. Involved in tetrahydrobiopterin biosynthesis. Seems to both prevent the formation of 7-pterins and accelerate the formation of quinonoid-BH2. In terms of biological role, regulates the dimerization of homeodomain protein HNF-1-alpha and enhances its transcriptional activity. The chain is Pterin-4-alpha-carbinolamine dehydratase 2 (PCBD2) from Pongo abelii (Sumatran orangutan).